A 231-amino-acid polypeptide reads, in one-letter code: Heptaprenylglyceryl phosphate synthase (231 aa).

K12 lines the sn-glycerol 1-phosphate pocket. Residues D14 and T40 each contribute to the Mg(2+) site. Sn-glycerol 1-phosphate-binding positions include 159–164 (YLEYSG), G189, and 209–210 (GN).

This sequence belongs to the GGGP/HepGP synthase family. Group I subfamily. In terms of assembly, homodimer. Requires Mg(2+) as cofactor.

It carries out the reaction sn-glycerol 1-phosphate + all-trans-heptaprenyl diphosphate = 3-heptaprenyl-sn-glycero-1-phosphate + diphosphate. Its pathway is membrane lipid metabolism; glycerophospholipid metabolism. Its function is as follows. Prenyltransferase that catalyzes in vivo the transfer of the heptaprenyl moiety of heptaprenyl pyrophosphate (HepPP; 35 carbon atoms) to the C3 hydroxyl of sn-glycerol-1-phosphate (G1P), producing heptaprenylglyceryl phosphate (HepGP). This reaction is an ether-bond-formation step in the biosynthesis of archaea-type G1P-based membrane lipids found in Bacillales. The chain is Heptaprenylglyceryl phosphate synthase from Staphylococcus haemolyticus (strain JCSC1435).